We begin with the raw amino-acid sequence, 437 residues long: Proton/glutamate-aspartate symporter (437 aa).

At methionine 1–lysine 5 the chain is on the cytoplasmic side. A helical membrane pass occupies residues phenylalanine 6–leucine 26. Residues histidine 27–histidine 50 lie on the Periplasmic side of the membrane. The chain crosses the membrane as a helical span at residues leucine 51–valine 71. Residues glycine 72–threonine 84 lie on the Cytoplasmic side of the membrane. The chain crosses the membrane as a helical span at residues isoleucine 85 to valine 105. Residues phenylalanine 106–glutamate 159 are Periplasmic-facing. A helical transmembrane segment spans residues methionine 160–threonine 180. Topologically, residues histidine 181–glycine 210 are cytoplasmic. A helical membrane pass occupies residues valine 211 to alanine 231. Lysine 232 is a topological domain (periplasmic). A helical membrane pass occupies residues leucine 233–alanine 253. The Cytoplasmic portion of the chain corresponds to arginine 254–glutamate 292. The helical transmembrane segment at alanine 293–leucine 313 threads the bilayer. The Periplasmic segment spans residues aspartate 314–alanine 324. Residues isoleucine 325 to leucine 345 traverse the membrane as a helical segment. The Cytoplasmic portion of the chain corresponds to threonine 346–serine 361. A helical membrane pass occupies residues phenylalanine 362–isoleucine 382. Topologically, residues alanine 383–arginine 387 are periplasmic. The helical transmembrane segment at isoleucine 388–isoleucine 408 threads the bilayer. At alanine 409 to glutamine 437 the chain is on the cytoplasmic side.

It belongs to the dicarboxylate/amino acid:cation symporter (DAACS) (TC 2.A.23) family. GltP subfamily.

The protein resides in the cell inner membrane. With respect to regulation, glutamate uptake is inhibited by L-cysteate and beta-hydroxyaspartate. Inhibited by the uncoupler carbonylcyanide m-chlorophenylhydrazone (CCCP). Functionally, catalyzes the proton-dependent, binding-protein-independent transport of glutamate and aspartate. This Escherichia coli (strain K12) protein is Proton/glutamate-aspartate symporter.